Here is a 921-residue protein sequence, read N- to C-terminus: Translation initiation factor IF-2 (921 aa).

The tract at residues 1-296 is disordered; that stretch reads MADQNTPGDK…PGPQKQRGRL (296 aa). The span at 80–89 shows a compositional bias: low complexity; it reads RPSGPRPSGG. A compositionally biased stretch (basic and acidic residues) spans 117–183; sequence ARVRDLEERR…AKKRFGEGEA (67 aa). Low complexity-rich tracts occupy residues 184–237 and 248–257; these read PRPA…ARPA and GRAPAAVAAG. Residues 417 to 586 enclose the tr-type G domain; sequence PRSPVVTVMG…MIALQADILD (170 aa). A G1 region spans residues 426–433; sequence GHVDHGKT. 426–433 is a binding site for GTP; it reads GHVDHGKT. The interval 451–455 is G2; that stretch reads GITQH. Residues 474–477 are G3; that stretch reads DTPG. GTP contacts are provided by residues 474–478 and 528–531; these read DTPGH and NKID. The segment at 528 to 531 is G4; sequence NKID. Positions 564-566 are G5; it reads SAK.

It belongs to the TRAFAC class translation factor GTPase superfamily. Classic translation factor GTPase family. IF-2 subfamily.

Its subcellular location is the cytoplasm. Its function is as follows. One of the essential components for the initiation of protein synthesis. Protects formylmethionyl-tRNA from spontaneous hydrolysis and promotes its binding to the 30S ribosomal subunits. Also involved in the hydrolysis of GTP during the formation of the 70S ribosomal complex. The chain is Translation initiation factor IF-2 from Bradyrhizobium sp. (strain ORS 278).